We begin with the raw amino-acid sequence, 179 residues long: Large ribosomal subunit protein uL5 (179 aa).

The protein belongs to the universal ribosomal protein uL5 family. As to quaternary structure, part of the 50S ribosomal subunit; part of the 5S rRNA/L5/L18/L25 subcomplex. Contacts the 5S rRNA and the P site tRNA. Forms a bridge to the 30S subunit in the 70S ribosome.

Its function is as follows. This is one of the proteins that bind and probably mediate the attachment of the 5S RNA into the large ribosomal subunit, where it forms part of the central protuberance. In the 70S ribosome it contacts protein S13 of the 30S subunit (bridge B1b), connecting the 2 subunits; this bridge is implicated in subunit movement. Contacts the P site tRNA; the 5S rRNA and some of its associated proteins might help stabilize positioning of ribosome-bound tRNAs. This Dehalococcoides mccartyi (strain ATCC BAA-2266 / KCTC 15142 / 195) (Dehalococcoides ethenogenes (strain 195)) protein is Large ribosomal subunit protein uL5.